The following is a 129-amino-acid chain: Transcriptional activator protein (129 aa).

Positions 1 to 12 are enriched in low complexity; that stretch reads MRSSSPSQPPSI. Residues 1–21 form a disordered region; the sequence is MRSSSPSQPPSIKKAHRQAKR. A Nuclear localization signal motif is present at residues 13–28; sequence KKAHRQAKRRAIRRRR. Residues 33–50 fold into a zinc finger; the sequence is CGCSIYFHIDCTGHGFTH. Positions 84–114 are disordered; it reads IHQNEDIPCTNTVQPQPEESVASPQSLPELP. Residues 92–109 show a composition bias toward polar residues; the sequence is CTNTVQPQPEESVASPQS. The transactivation stretch occupies residues 115 to 129; it reads SLDDFDDSFWVNLFK.

It belongs to the geminiviridae transcriptional activator protein family. In terms of assembly, monomer. Homodimer. Homooligomer. Self-interaction correlates with nuclear localization and efficient activation of transcription. Monomers suppress local silencing by interacting with and inactivating host adenosine kinase 2 (ADK2) in the cytoplasm. Interacts with and inhibits host SNF1 kinase. Binds to ssDNA. In terms of processing, phosphorylated.

The protein resides in the host nucleus. The protein localises to the host cytoplasm. Strong activator of the late viral genes promoters. Enhances the expression of the capsid protein and nuclear shuttle protein. Acts as a suppressor of RNA-mediated gene silencing, also known as post-transcriptional gene silencing (PTGS), a mechanism of plant viral defense that limits the accumulation of viral RNAs. Suppresses the host RNA silencing by inhibiting adenosine kinase 2 (ADK2), a kinase involved in a general methylation pathway. Also suppresses the host basal defense by interacting with and inhibiting SNF1 kinase, a key regulator of cell metabolism implicated in innate antiviral defense. Determines pathogenicity. The chain is Transcriptional activator protein from Abutilon (Upland cotton).